A 379-amino-acid chain; its full sequence is MTKSIIASEPPSAESSGRLPWKILGQTTGFPNQDQELWWLNTAPLLNEFLAECQYDVHLQYQYLTFFRHHVIPVLGPFFAPGTTPNFASRLSKHGHPLDFSVNFQESGATVRMSLGAIGSFAGLQQDPLNQFRAREVLDKLAILYPTVDLQLFKHFESEFGINHADALKVAAKLPKLDRATKMIAIDMLKNGSMTFKVYYMVRSKAAATGLPVHTVLFNAVQRLGSAFEPGLSLLKQFLSPLCDAGETDLGLLSFDCVPTESSRIKLYAIKQVGSLDAIRNLWTLGGTMDDPTTMKGLAVLEHVCELLQFGWSGDSRVQPILFNYEIKKGSTPKPQIYIPLADRYDEFDAAKLKAVFQDLDWKRVPFYQDTGKDLASVL.

Residues 90–91 (RL), arginine 112, lysine 197, arginine 264, lysine 266, tyrosine 268, and tyrosine 338 contribute to the substrate site.

Belongs to the tryptophan dimethylallyltransferase family.

It catalyses the reaction aspulvinone E + 2 dimethylallyl diphosphate = aspulvinone H + 2 diphosphate. The catalysed reaction is butyrolactone II + dimethylallyl diphosphate = butyrolactone I + diphosphate. The protein operates within secondary metabolite biosynthesis. Its function is as follows. Trans-prenyltransferase that acts in both the aspulvinones and butyrolactones pathways. Prenylates aspulvinone E and butyrolactone II to yield repectively aspulvinone H and butyrolactone I. This chain is Trans-prenyltransferase abpB, found in Aspergillus terreus (strain NIH 2624 / FGSC A1156).